Consider the following 839-residue polypeptide: Homeobox-leucine zipper protein HOX10 (839 aa).

Disordered stretches follow at residues 1 to 24 (MAAA…SGMD) and 132 to 157 (QNTP…RDAS). The segment at residues 24–87 (DSGKYVRYTP…NRRCRDKQRK (64 aa)) is a DNA-binding region (homeobox). The stretch at 91 to 134 (RLQAVNRKLTAMNKLLMEENERLQKQVSQLVHENAHMRQQLQNT) forms a coiled coil. Positions 155–383 (DASNPSGLLS…IAQETSGEVV (229 aa)) constitute an START domain.

This sequence belongs to the HD-ZIP homeobox family. Class III subfamily. In terms of tissue distribution, expressed in stems, leaf sheaths and blades and panicles.

The protein localises to the nucleus. Probable transcription factor. The polypeptide is Homeobox-leucine zipper protein HOX10 (HOX10) (Oryza sativa subsp. indica (Rice)).